The primary structure comprises 361 residues: Velvet complex subunit B (361 aa).

Disordered stretches follow at residues Met-1–Gln-36 and Asn-308–Arg-340. Over residues Pro-23–Arg-35 the composition is skewed to polar residues. One can recognise a Velvet domain in the interval Gln-47 to Ser-353. Over residues Ser-323 to Pro-336 the composition is skewed to low complexity.

It belongs to the velvet family. VelB subfamily. In terms of assembly, component of the heterotrimeric velvet complex composed of laeA, veA and velB; VeA acting as a bridging protein between laeA and velB. Interacts with velA. Forms a heterodimeric complex with vosA; the formation of the velB-vosA complex is light-dependent. Interacts with vosA.

It localises to the nucleus. It is found in the cytoplasm. Its function is as follows. Component of the velvet transcription factor complex that controls sexual/asexual developmental ratio in response to light, promoting sexual development in the darkness while stimulating asexual sporulation under illumination. The velvet complex acts as a global regulator for secondary metabolite gene expression. Component of the velB-VosA heterodimeric complex that plays a dual role in activating genes associated with spore maturation and repressing certain development-associated genes. The velB-VosA complex binds DNA through the DNA-binding domain of vosA that recognizes an 11-nucleotide consensus sequence 5'-CTGGCCGCGGC-3' consisting of two motifs in the promoters of key developmental regulatory genes. Controls conidiophore formation. The chain is Velvet complex subunit B from Penicillium rubens (strain ATCC 28089 / DSM 1075 / NRRL 1951 / Wisconsin 54-1255) (Penicillium chrysogenum).